The primary structure comprises 140 residues: uncharacterized protein (140 aa).

This is an uncharacterized protein from Mycoplasma genitalium (strain ATCC 33530 / DSM 19775 / NCTC 10195 / G37) (Mycoplasmoides genitalium).